We begin with the raw amino-acid sequence, 948 residues long: FRIGIDA-like protein 5 (948 aa).

Residues 47 to 164 adopt a coiled-coil conformation; the sequence is DSTRSVLEER…VEKHRERIVA (118 aa). Disordered regions lie at residues 447–500, 518–538, and 804–894; these read ESAQ…APSQ, VKES…SGTE, and RNTS…YPSH. Basic and acidic residues-rich tracts occupy residues 459–475 and 518–527; these read SYEK…KSEA and VKESGADHQP. The span at 807–817 shows a compositional bias: low complexity; it reads SNGSGSGSASS. Residues 818–830 show a composition bias toward polar residues; sequence KPDSTIKQSQTAK. The segment covering 861 to 872 has biased composition (basic residues); sequence FSKKNKRGKKRS. Positions 873–894 are enriched in polar residues; that stretch reads MSGNNQSSGHIASHTSNHYPSH.

It belongs to the Frigida family. In terms of tissue distribution, expressed at low levels during seed development.

This Arabidopsis thaliana (Mouse-ear cress) protein is FRIGIDA-like protein 5 (FRL5).